Reading from the N-terminus, the 166-residue chain is NADPH-dependent 7-cyano-7-deazaguanine reductase (166 aa).

Cys-57 functions as the Thioimide intermediate in the catalytic mechanism. Asp-64 serves as the catalytic Proton donor. Substrate-binding positions include Val-79–Ser-81 and His-98–Glu-99.

The protein belongs to the GTP cyclohydrolase I family. QueF type 1 subfamily.

Its subcellular location is the cytoplasm. The catalysed reaction is 7-aminomethyl-7-carbaguanine + 2 NADP(+) = 7-cyano-7-deazaguanine + 2 NADPH + 3 H(+). Its pathway is tRNA modification; tRNA-queuosine biosynthesis. Catalyzes the NADPH-dependent reduction of 7-cyano-7-deazaguanine (preQ0) to 7-aminomethyl-7-deazaguanine (preQ1). The chain is NADPH-dependent 7-cyano-7-deazaguanine reductase from Staphylococcus aureus (strain MRSA252).